Here is a 401-residue protein sequence, read N- to C-terminus: Argininosuccinate synthase (401 aa).

ATP is bound at residue 9-17; that stretch reads AYSGGLDTS. Tyr88 serves as a coordination point for L-citrulline. Gly118 contacts ATP. Thr120, Asn124, and Asp125 together coordinate L-aspartate. Asn124 is an L-citrulline binding site. Residues Arg128, Ser177, Ser186, Glu262, and Tyr274 each coordinate L-citrulline.

It belongs to the argininosuccinate synthase family. Type 1 subfamily. As to quaternary structure, homotetramer.

The protein localises to the cytoplasm. It carries out the reaction L-citrulline + L-aspartate + ATP = 2-(N(omega)-L-arginino)succinate + AMP + diphosphate + H(+). It functions in the pathway amino-acid biosynthesis; L-arginine biosynthesis; L-arginine from L-ornithine and carbamoyl phosphate: step 2/3. This Chlorobaculum tepidum (strain ATCC 49652 / DSM 12025 / NBRC 103806 / TLS) (Chlorobium tepidum) protein is Argininosuccinate synthase.